A 363-amino-acid chain; its full sequence is 3-isopropylmalate dehydrogenase (363 aa).

79-92 is an NAD(+) binding site; it reads GPKWEHLPPNDQPE. Residues R100, R110, R139, and D228 each coordinate substrate. Residues D228, D252, and D256 each contribute to the Mg(2+) site. 286–298 is an NAD(+) binding site; that stretch reads GSAPDIAGKNIAN.

It belongs to the isocitrate and isopropylmalate dehydrogenases family. LeuB type 1 subfamily. As to quaternary structure, homodimer. The cofactor is Mg(2+). Mn(2+) is required as a cofactor.

The protein resides in the cytoplasm. The enzyme catalyses (2R,3S)-3-isopropylmalate + NAD(+) = 4-methyl-2-oxopentanoate + CO2 + NADH. It functions in the pathway amino-acid biosynthesis; L-leucine biosynthesis; L-leucine from 3-methyl-2-oxobutanoate: step 3/4. Catalyzes the oxidation of 3-carboxy-2-hydroxy-4-methylpentanoate (3-isopropylmalate) to 3-carboxy-4-methyl-2-oxopentanoate. The product decarboxylates to 4-methyl-2 oxopentanoate. In Aliivibrio fischeri (strain ATCC 700601 / ES114) (Vibrio fischeri), this protein is 3-isopropylmalate dehydrogenase.